The following is a 924-amino-acid chain: Protein translocase subunit SecA (924 aa).

Residues glutamine 87, 105 to 109 (GEGKT), and aspartate 517 each bind ATP. A disordered region spans residues 886–906 (VPAADRDPNDPSTWGKVGRNE). Zn(2+) is bound by residues cysteine 908, cysteine 910, cysteine 919, and histidine 920.

This sequence belongs to the SecA family. As to quaternary structure, monomer and homodimer. Part of the essential Sec protein translocation apparatus which comprises SecA, SecYEG and auxiliary proteins SecDF-YajC and YidC. It depends on Zn(2+) as a cofactor.

Its subcellular location is the cell inner membrane. The protein localises to the cytoplasm. It catalyses the reaction ATP + H2O + cellular proteinSide 1 = ADP + phosphate + cellular proteinSide 2.. Functionally, part of the Sec protein translocase complex. Interacts with the SecYEG preprotein conducting channel. Has a central role in coupling the hydrolysis of ATP to the transfer of proteins into and across the cell membrane, serving both as a receptor for the preprotein-SecB complex and as an ATP-driven molecular motor driving the stepwise translocation of polypeptide chains across the membrane. This is Protein translocase subunit SecA from Azorhizobium caulinodans (strain ATCC 43989 / DSM 5975 / JCM 20966 / LMG 6465 / NBRC 14845 / NCIMB 13405 / ORS 571).